The sequence spans 273 residues: MSDTLTNTGRYQATFAKLKAEGRGAFVPFVTLGDPSPELSLKIIDTLVQNGADALELGFPFSDPLADGPVIQGANLRSLAAGTTPTACFELLAQVRAKYPELPIGLLLYANLVFANGIDAFYAKAQQAGVDSVLIADVPVEESAPFSEAAKAHGIAPIFIAPPNADSETLALVSASGEGYTYLLSRAGVTGTDTKAGVPVEEILSKLKTFNAPPPLLGFGIAEPAQVSAAIKAGAAGAISGSAVVKIIETHQHDEAKLLATLGDFTRAMKAAT.

Catalysis depends on proton acceptor residues E56 and D67.

Belongs to the TrpA family. Tetramer of two alpha and two beta chains.

The enzyme catalyses (1S,2R)-1-C-(indol-3-yl)glycerol 3-phosphate + L-serine = D-glyceraldehyde 3-phosphate + L-tryptophan + H2O. Its pathway is amino-acid biosynthesis; L-tryptophan biosynthesis; L-tryptophan from chorismate: step 5/5. The alpha subunit is responsible for the aldol cleavage of indoleglycerol phosphate to indole and glyceraldehyde 3-phosphate. The protein is Tryptophan synthase alpha chain of Shewanella baltica (strain OS155 / ATCC BAA-1091).